The chain runs to 3184 residues: WD repeat- and FYVE domain-containing protein 4 (3184 aa).

The span at 1–18 (MEAEDLSKAEDRNEDPGS) shows a compositional bias: basic and acidic residues. Disordered regions lie at residues 1 to 39 (MEAE…QSSS), 944 to 993 (SHTH…QDST), 1837 to 1869 (VGAE…KAHP), and 2309 to 2335 (ALSS…NQDE). A compositionally biased stretch (polar residues) spans 981 to 993 (QAPQPLGESQDST). Residues 2314-2324 (RHKESQDKNDH) show a composition bias toward basic and acidic residues. Positions 2385-2510 (LDKEKVTQKF…DRSKAFKSFC (126 aa)) constitute a BEACH-type PH domain. The BEACH domain occupies 2527 to 2821 (SLRRYPGSDR…QLFTKPHPAR (295 aa)). WD repeat units lie at residues 2863 to 2922 (MYLF…YGSD), 2923 to 2972 (KVLM…PRGL), 2973 to 3014 (RLRQ…LDHL), 3015 to 3057 (THVT…GQPL), 3058 to 3141 (ASIT…ELDV), and 3142 to 3184 (SIAL…SADG). Residues 3107 to 3128 (SVPGRPAGEEPPAQPPSPRGHK) are disordered.

Interacts with HSP90AB1.

The protein localises to the early endosome. It is found in the endoplasmic reticulum. Functionally, plays a critical role in the regulation of cDC1-mediated cross-presentation of viral and tumor antigens in dendritic cells. Mechanistically, acts near the plasma membrane and interacts with endosomal membranes to promote endosomal-to-cytosol antigen trafficking. Also plays a role in B-cell survival through regulation of autophagy. The protein is WD repeat- and FYVE domain-containing protein 4 (WDFY4) of Homo sapiens (Human).